The primary structure comprises 536 residues: UDP-glucuronosyltransferase 2A2 (536 aa).

Over 1–15 (MVSIRDFTMPKKFVQ) the chain is Cytoplasmic. A helical transmembrane segment spans residues 16–36 (MLVFNLTLTEVVLSGNVLIWP). Topologically, residues 37–500 (TDGSHWLNIK…TWFQYHSLDV (464 aa)) are lumenal. Residues asparagine 58, asparagine 322, and asparagine 356 are each glycosylated (N-linked (GlcNAc...) asparagine). Residues 501–521 (IGFLLVCVTTAIFLVIQCCLF) traverse the membrane as a helical segment. The Cytoplasmic segment spans residues 522–536 (SCQKFGKIGKKKKRE).

Belongs to the UDP-glycosyltransferase family. In terms of tissue distribution, mainly expressed in the nasal mucosa.

It is found in the endoplasmic reticulum membrane. It catalyses the reaction glucuronate acceptor + UDP-alpha-D-glucuronate = acceptor beta-D-glucuronoside + UDP + H(+). The catalysed reaction is 17alpha-estradiol + UDP-alpha-D-glucuronate = 17alpha-estradiol 3-O-(beta-D-glucuronate) + UDP + H(+). The enzyme catalyses 17beta-estradiol + UDP-alpha-D-glucuronate = 17beta-estradiol 3-O-(beta-D-glucuronate) + UDP + H(+). It carries out the reaction chenodeoxycholate + UDP-alpha-D-glucuronate = chenodeoxycholoyl-24-O-(beta-D-glucuronate) + UDP. It catalyses the reaction lithocholate + UDP-alpha-D-glucuronate = lithocholoyl-24-O-(beta-D-glucuronate) + UDP. The catalysed reaction is deoxycholate + UDP-alpha-D-glucuronate = deoxycholoyl-24-O-(beta-D-glucuronate) + UDP. The enzyme catalyses hyocholate + UDP-alpha-D-glucuronate = hyocholoyl-24-O-(beta-D-glucuronate) + UDP. It carries out the reaction hyodeoxycholate + UDP-alpha-D-glucuronate = hyodeoxycholate 6-O-(beta-D-glucuronate) + UDP + H(+). Functionally, UDP-glucuronosyltransferase (UGT) that catalyzes phase II biotransformation reactions in which lipophilic substrates are conjugated with glucuronic acid to increase the metabolite's water solubility, thereby facilitating excretion into either the urine or bile. Essential for the elimination and detoxification of drugs, xenobiotics and endogenous compounds. Catalyzes the glucuronidation of endogenous estrogen hormone estradiol. Contributes to bile acid (BA) detoxification by catalyzing the glucuronidation of BA substrates, which are natural detergents for dietary lipids absorption. Shows a potential role in detoxification of toxic waste compounds in the amniotic fluid before birth, and air-born chemical after birth. The chain is UDP-glucuronosyltransferase 2A2 from Homo sapiens (Human).